The primary structure comprises 534 residues: Light-independent protochlorophyllide reductase subunit B (534 aa).

Asp36 serves as a coordination point for [4Fe-4S] cluster. Asp274 (proton donor) is an active-site residue. Position 409-410 (Gly409–Leu410) interacts with substrate. The interval Asp426 to Asp446 is disordered.

It belongs to the ChlB/BchB/BchZ family. In terms of assembly, protochlorophyllide reductase is composed of three subunits; BchL, BchN and BchB. Forms a heterotetramer of two BchB and two BchN subunits. [4Fe-4S] cluster serves as cofactor.

It catalyses the reaction chlorophyllide a + oxidized 2[4Fe-4S]-[ferredoxin] + 2 ADP + 2 phosphate = protochlorophyllide a + reduced 2[4Fe-4S]-[ferredoxin] + 2 ATP + 2 H2O. Its pathway is porphyrin-containing compound metabolism; bacteriochlorophyll biosynthesis (light-independent). In terms of biological role, component of the dark-operative protochlorophyllide reductase (DPOR) that uses Mg-ATP and reduced ferredoxin to reduce ring D of protochlorophyllide (Pchlide) to form chlorophyllide a (Chlide). This reaction is light-independent. The NB-protein (BchN-BchB) is the catalytic component of the complex. This Cereibacter sphaeroides (strain ATCC 17023 / DSM 158 / JCM 6121 / CCUG 31486 / LMG 2827 / NBRC 12203 / NCIMB 8253 / ATH 2.4.1.) (Rhodobacter sphaeroides) protein is Light-independent protochlorophyllide reductase subunit B.